Consider the following 1295-residue polypeptide: DNA-directed RNA polymerase subunit beta' (1295 aa).

Cys60, Cys62, Cys75, and Cys78 together coordinate Zn(2+). Mg(2+) contacts are provided by Asp516, Asp518, and Asp520. Zn(2+) contacts are provided by Cys841, Cys914, Cys921, and Cys924.

This sequence belongs to the RNA polymerase beta' chain family. The RNAP catalytic core consists of 2 alpha, 1 beta, 1 beta' and 1 omega subunit. When a sigma factor is associated with the core the holoenzyme is formed, which can initiate transcription. The cofactor is Mg(2+). It depends on Zn(2+) as a cofactor.

It carries out the reaction RNA(n) + a ribonucleoside 5'-triphosphate = RNA(n+1) + diphosphate. Functionally, DNA-dependent RNA polymerase catalyzes the transcription of DNA into RNA using the four ribonucleoside triphosphates as substrates. This Dehalococcoides mccartyi (strain ATCC BAA-2266 / KCTC 15142 / 195) (Dehalococcoides ethenogenes (strain 195)) protein is DNA-directed RNA polymerase subunit beta'.